The primary structure comprises 318 residues: Methionyl-tRNA formyltransferase (318 aa).

112–115 (SILP) is a binding site for (6S)-5,6,7,8-tetrahydrofolate.

Belongs to the Fmt family.

The catalysed reaction is L-methionyl-tRNA(fMet) + (6R)-10-formyltetrahydrofolate = N-formyl-L-methionyl-tRNA(fMet) + (6S)-5,6,7,8-tetrahydrofolate + H(+). Attaches a formyl group to the free amino group of methionyl-tRNA(fMet). The formyl group appears to play a dual role in the initiator identity of N-formylmethionyl-tRNA by promoting its recognition by IF2 and preventing the misappropriation of this tRNA by the elongation apparatus. The protein is Methionyl-tRNA formyltransferase of Shewanella sp. (strain ANA-3).